The chain runs to 448 residues: Signal recognition particle 54 kDa protein (448 aa).

Residues 107-114, 189-193, and 247-250 each bind GTP; these read GIQGSGKT, DSAGR, and TKLD.

The protein belongs to the GTP-binding SRP family. SRP54 subfamily. As to quaternary structure, part of the signal recognition particle protein translocation system, which is composed of SRP and FtsY. Archaeal SRP consists of a 7S RNA molecule of 300 nucleotides and two protein subunits: SRP54 and SRP19.

Its subcellular location is the cytoplasm. It carries out the reaction GTP + H2O = GDP + phosphate + H(+). Involved in targeting and insertion of nascent membrane proteins into the cytoplasmic membrane. Binds to the hydrophobic signal sequence of the ribosome-nascent chain (RNC) as it emerges from the ribosomes. The SRP-RNC complex is then targeted to the cytoplasmic membrane where it interacts with the SRP receptor FtsY. This is Signal recognition particle 54 kDa protein from Thermococcus kodakarensis (strain ATCC BAA-918 / JCM 12380 / KOD1) (Pyrococcus kodakaraensis (strain KOD1)).